We begin with the raw amino-acid sequence, 613 residues long: Carotenoid dioxygenase (613 aa).

Residues 1–25 (MSPHEVIGTVPKNSTTFRTQADEHD) form a disordered region. The Fe(2+) site is built by H261, H313, H383, and H595.

The protein belongs to the carotenoid oxygenase family. The cofactor is Fe(2+).

The protein resides in the cytoplasm. Its subcellular location is the cytosol. It carries out the reaction torulene + O2 = 4'-apo-beta-carotenal + 3-methyl-2-butenal. It participates in carotenoid biosynthesis. Torulene dioxygenase; part of pathway that mediates the biosynthesis of neurosporaxanthin, a carboxylic apocarotenoid acting as an essential protective pigments and leading to orange pigmentation. Cao-2 mediates the cleavage of torulene into beta-apo-4'-carotenal, the aldehyde corresponding to the acidic neurosporaxanthin. Is not able to use gamma-carotene (that it is not desaturated at the C4'-C5' bond) as substrate, which suggests a high specificity of cao-2 in cleaving the C4'-C5' double bond. Neurosporaxanthin is synthesized from geranyl-geranyl pyrophosphate (GGPP) through several enzymatic activities. Phytoene synthase activity performed by the bifunctional enzyme al-2 first produces phytoene from geranyl-geranyl pyrophosphate (GGPP). The phytoene dehydrogenase al-1 then introduces 5 desaturations to lead to 3,4-didehydrolycopene via the intermediates phytofluene, zeta-carotene, neurosporene and lycopene. Al-2 cyclase activity then converts 3,4-didehydrolycopene into torulene. Al-2 can also convet lycopene into gamma-carotene which in turn is converted to beta-carotene by an additional al-2 cyclization reaction. Torulene is the substrate of the dioxidase cao-2 that breaks the molecule, removing five carbon atoms to yield beta-apo-4'-carotenal, whereas the aldehyde dehydrogenase ylo-1 mediates the last step by converting beta-apo-4'-carotenal into neurosporaxanthin. The chain is Carotenoid dioxygenase from Neurospora crassa (strain ATCC 24698 / 74-OR23-1A / CBS 708.71 / DSM 1257 / FGSC 987).